Reading from the N-terminus, the 140-residue chain is L-fucose mutarotase (140 aa).

H22 (proton donor) is an active-site residue. Residues D30, R107, and 129–131 contribute to the substrate site; that span reads YGN.

It belongs to the RbsD / FucU family. FucU mutarotase subfamily. As to quaternary structure, homodecamer.

The protein localises to the cytoplasm. The enzyme catalyses alpha-L-fucose = beta-L-fucose. It functions in the pathway carbohydrate metabolism; L-fucose metabolism. In terms of biological role, involved in the anomeric conversion of L-fucose. The chain is L-fucose mutarotase from Salmonella paratyphi B (strain ATCC BAA-1250 / SPB7).